A 1080-amino-acid polypeptide reads, in one-letter code: Histone deacetylase 4 (1080 aa).

3 disordered regions span residues 1–25 (MSSQ…PPRV), 132–165 (KLEQ…ESAV), and 205–312 (TQHS…ISAE). Residues 132–162 (KLEQHRQEQELEKQHREQKLQQLKNKEKGKE) are compositionally biased toward basic and acidic residues. A compositionally biased stretch (polar residues) spans 205–224 (TQHSSLDQSSPPQSGVSGTY). Composition is skewed to basic and acidic residues over residues 233-244 (DSKDDFPLRKTA) and 258-273 (KVAE…RKDG). A compositionally biased stretch (low complexity) spans 289 to 312 (SACNSAPGSGPSSPNNSSNNISAE). A PxLPxI/L motif is present at residues 348–353 (PSLPNI). Disordered regions lie at residues 506 to 527 (KPNE…ELRE), 558 to 579 (EPIE…GQRQ), and 622 to 646 (PLSR…PTKP). Over residues 509-527 (EPARQHESHPEETEEELRE) the composition is skewed to basic and acidic residues. Positions 560 to 571 (IESDEEEAEPQQ) are enriched in acidic residues. The span at 625-637 (RAQSSPASATFPM) shows a compositional bias: polar residues. Residues 651-1080 (GLVYDTLMLK…DEPMEEEPPL (430 aa)) are histone deacetylase. Zn(2+)-binding residues include Cys663, Cys665, His671, and Cys747. Residue His799 is part of the active site. Residues 1055–1080 (MASLSVGVKPAEKRPDDEPMEEEPPL) form a disordered region.

Belongs to the histone deacetylase family. HD type 2 subfamily.

It localises to the nucleus. It carries out the reaction N(6)-acetyl-L-lysyl-[histone] + H2O = L-lysyl-[histone] + acetate. Responsible for the deacetylation of lysine residues on the N-terminal part of the core histones (H2A, H2B, H3 and H4). Histone deacetylation gives a tag for epigenetic repression and plays an important role in transcriptional regulation, cell cycle progression and developmental events. Histone deacetylases act via the formation of large multiprotein complexes. This is Histone deacetylase 4 (HDAC4) from Gallus gallus (Chicken).